The sequence spans 158 residues: UPF0262 protein Rsph17025_0594 (158 aa).

The protein belongs to the UPF0262 family.

This chain is UPF0262 protein Rsph17025_0594, found in Cereibacter sphaeroides (strain ATCC 17025 / ATH 2.4.3) (Rhodobacter sphaeroides).